The primary structure comprises 149 residues: Deoxyuridine 5'-triphosphate nucleotidohydrolase (149 aa).

Substrate contacts are provided by residues 68–70, Asn-81, and 85–87; these read RSG and LID.

The protein belongs to the dUTPase family. The cofactor is Mg(2+).

It catalyses the reaction dUTP + H2O = dUMP + diphosphate + H(+). It participates in pyrimidine metabolism; dUMP biosynthesis; dUMP from dCTP (dUTP route): step 2/2. This enzyme is involved in nucleotide metabolism: it produces dUMP, the immediate precursor of thymidine nucleotides and it decreases the intracellular concentration of dUTP so that uracil cannot be incorporated into DNA. The polypeptide is Deoxyuridine 5'-triphosphate nucleotidohydrolase (Nitrosospira multiformis (strain ATCC 25196 / NCIMB 11849 / C 71)).